Reading from the N-terminus, the 200-residue chain is MYAYVKGKLTHLYPTHVVVETAGVGYEIQTPNSYRFQKHLDHEVLIHTSLIVREDAQLLYGFSSEEEKDMFLSLIKVTGIGPKSALAILATSTPNEVKRAIENENDTYLTKFPGIGKKTARQIVLDLKGKVKITEEDSDSLLQVDATSTVQDQFVQEAMLALEALGYSKRELAKVEKTLNKNKYDSVDEAVKAGLQLVVS.

The domain I stretch occupies residues 1–63 (MYAYVKGKLT…EDAQLLYGFS (63 aa)). Residues 64 to 142 (SEEEKDMFLS…ITEEDSDSLL (79 aa)) are domain II. Residues 143 to 149 (QVDATST) form a flexible linker region. A domain III region spans residues 150–200 (VQDQFVQEAMLALEALGYSKRELAKVEKTLNKNKYDSVDEAVKAGLQLVVS).

This sequence belongs to the RuvA family. In terms of assembly, homotetramer. Forms an RuvA(8)-RuvB(12)-Holliday junction (HJ) complex. HJ DNA is sandwiched between 2 RuvA tetramers; dsDNA enters through RuvA and exits via RuvB. An RuvB hexamer assembles on each DNA strand where it exits the tetramer. Each RuvB hexamer is contacted by two RuvA subunits (via domain III) on 2 adjacent RuvB subunits; this complex drives branch migration. In the full resolvosome a probable DNA-RuvA(4)-RuvB(12)-RuvC(2) complex forms which resolves the HJ.

The protein localises to the cytoplasm. Functionally, the RuvA-RuvB-RuvC complex processes Holliday junction (HJ) DNA during genetic recombination and DNA repair, while the RuvA-RuvB complex plays an important role in the rescue of blocked DNA replication forks via replication fork reversal (RFR). RuvA specifically binds to HJ cruciform DNA, conferring on it an open structure. The RuvB hexamer acts as an ATP-dependent pump, pulling dsDNA into and through the RuvAB complex. HJ branch migration allows RuvC to scan DNA until it finds its consensus sequence, where it cleaves and resolves the cruciform DNA. The polypeptide is Holliday junction branch migration complex subunit RuvA (Staphylococcus aureus (strain USA300)).